Reading from the N-terminus, the 294-residue chain is 4-diphosphocytidyl-2-C-methyl-D-erythritol kinase (294 aa).

The active site involves Lys11. Residue 96-106 (PVAAGIGGGSA) participates in ATP binding. Residue Asp138 is part of the active site.

The protein belongs to the GHMP kinase family. IspE subfamily.

It carries out the reaction 4-CDP-2-C-methyl-D-erythritol + ATP = 4-CDP-2-C-methyl-D-erythritol 2-phosphate + ADP + H(+). It functions in the pathway isoprenoid biosynthesis; isopentenyl diphosphate biosynthesis via DXP pathway; isopentenyl diphosphate from 1-deoxy-D-xylulose 5-phosphate: step 3/6. Functionally, catalyzes the phosphorylation of the position 2 hydroxy group of 4-diphosphocytidyl-2C-methyl-D-erythritol. The protein is 4-diphosphocytidyl-2-C-methyl-D-erythritol kinase of Rhodopseudomonas palustris (strain BisB5).